Here is a 216-residue protein sequence, read N- to C-terminus: Cyclic AMP receptor protein (216 aa).

6–126 (LFHGLAPEEV…HNLAALLARR (121 aa)) serves as a coordination point for a nucleoside 3',5'-cyclic phosphate. Residues 75–78 (GEMS) and 85–86 (RS) contribute to the 3',5'-cyclic AMP site. The 67-residue stretch at 140-206 (EEARNRVAYA…PGTVEVREAA (67 aa)) folds into the HTH crp-type domain. Positions 166-185 (HHELAALAGTSRETVSRVLH) form a DNA-binding region, H-T-H motif.

As to quaternary structure, homodimer.

Activates transcription. Positively regulates six promoters upstream of the TTHB186, TTHB147, TTHB178, TTHB159, TTHA0771 and TTHA0176 genes in a cAMP-dependent manner. Regulated genes include clustered regularly interspaced short palindromic repeat (CRISPR) associated (Cas) genes, and the genes encoding a putative transcriptional regulator, a protein containing the exonuclease III-like domain of DNA polymerase, a GCN5-related acetyltransferase homolog, and some T.thermophilus-specific proteins of unknown function. The consensus DNA-binding site of this transcriptional regulator is 5'-(CT)NNG(G/T)(G/T)C(A/C)N(A/T)NNTCACAN(G/C)(G/C)-3' in which N is G, A, T or C. In Thermus thermophilus (strain ATCC 27634 / DSM 579 / HB8), this protein is Cyclic AMP receptor protein.